The chain runs to 103 residues: Viscotoxin-B (103 aa).

The N-terminal stretch at 1-6 is a signal peptide; it reads FRNVES. Intrachain disulfides connect cysteine 9-cysteine 46, cysteine 10-cysteine 38, and cysteine 22-cysteine 32. Residues 53–103 constitute a propeptide, acidic domain; it reads FYCTLGCQSSKCASITTPPNSEVDAEAVRCKAACSNLCDFGVTTNQEIQDD.

It belongs to the plant thionin (TC 1.C.44) family.

Its subcellular location is the secreted. Functionally, thionins are small plant proteins which are toxic to animal cells. They seem to exert their toxic effect at the level of the cell membrane. Their precise function is not known. This is Viscotoxin-B (THI2.2) from Viscum album (European mistletoe).